Reading from the N-terminus, the 356-residue chain is Peptide chain release factor 1 (356 aa).

Glutamine 232 carries the N5-methylglutamine modification.

It belongs to the prokaryotic/mitochondrial release factor family. Methylated by PrmC. Methylation increases the termination efficiency of RF1.

The protein resides in the cytoplasm. Its function is as follows. Peptide chain release factor 1 directs the termination of translation in response to the peptide chain termination codons UAG and UAA. This Thermoanaerobacter pseudethanolicus (strain ATCC 33223 / 39E) (Clostridium thermohydrosulfuricum) protein is Peptide chain release factor 1.